A 935-amino-acid polypeptide reads, in one-letter code: DNA repair protein rev1 (935 aa).

The 89-residue stretch at 59 to 147 (SKSDLFHGLA…KILPWINYRT (89 aa)) folds into the BRCT domain. Positions 162 to 178 (SKPSQPEGNLEDIQTSS) are enriched in polar residues. A disordered region spans residues 162 to 193 (SKPSQPEGNLEDIQTSSQEEEHDNEKDKTKES). Over residues 184–193 (DNEKDKTKES) the composition is skewed to basic and acidic residues. Residues 235-245 (FFSSSRLHHLS) form an interaction with target DNA region. Residues Arg-240 and 283 to 287 (DFDCF) contribute to the dCTP site. The 182-residue stretch at 279–460 (LLHVDFDCFF…LSVQDLPGVG (182 aa)) folds into the UmuC domain. The Mg(2+) site is built by Asp-283 and Phe-284. Positions 310–312 (IKN) are interaction with target DNA. DCTP is bound by residues 317-323 (SCNYEAR), Asn-329, and Asp-378. Mg(2+) is bound by residues Asp-378 and Glu-379. Interaction with target DNA regions lie at residues 460–463 (GSSQ) and 517–525 (RRSISVDVN).

It belongs to the DNA polymerase type-Y family. The cofactor is Mg(2+).

The protein resides in the nucleus. Its subcellular location is the nucleolus. It localises to the mitochondrion. The protein localises to the cytoplasm. It is found in the cytoskeleton. The protein resides in the spindle. Its function is as follows. Deoxycytidyl transferase involved in DNA repair. Transfers a dCMP residue from dCTP to the 3'-end of a DNA primer in a template-dependent reaction. May assist in the first step in the bypass of abasic lesions by the insertion of a nucleotide opposite the lesion. Required for normal induction of mutations by physical and chemical agents. Involved in mitochondrial DNA mutagenesis. This is DNA repair protein rev1 from Schizosaccharomyces pombe (strain 972 / ATCC 24843) (Fission yeast).